Consider the following 216-residue polypeptide: DNA-binding protein HupB (216 aa).

Position 2 (glycine 2) is a propeptide, removed; alternate. At methionine 3 the chain carries N-acetylmethionine. The tract at residues 3 to 92 (MNKAELIDVL…PGAQFKAVVS (90 aa)) is bacterial histone-like domain. An N6-acetyllysine mark is found at lysine 5, lysine 74, lysine 88, lysine 105, lysine 118, and lysine 135. The interval 102–216 (PAVKRGVGAS…KKATARRGRK (115 aa)) is disordered. The degenerate repeats region stretch occupies residues 103 to 216 (AVKRGVGASA…KKATARRGRK (114 aa)). Over residues 104–114 (VKRGVGASAAK) the composition is skewed to low complexity. The segment covering 115-216 (KVAKKAPAKK…KKATARRGRK (102 aa)) has biased composition (basic residues). The residue at position 140 (lysine 140) is an N6,N6,N6-trimethyllysine. Lysine 148 and lysine 169 each carry N6-acetyllysine.

This sequence belongs to the bacterial histone-like protein family. Long actinobacterial subfamily. Oligomerizes. Interacts with topoisomerase 1 (topA). Interacts with Eis. Interacts with antigen 85 proteins (fbpA, fbpB, fbpC). Probably acetylated by Eis in vivo. In vitro acetylated by Eis (strain H37Rv and H37Ra) on many more residues than those identified in vivo. Deacetylated in vitro by NAD-dependent protein deacylase (Rv1151c). Post-translationally, trimethylated on Lys-140 by human SUV39H1; trimethylation inhibits mycobacterial growth. SUV39H1 probably also trimethylates another residue. In terms of processing, probably succinylated by Rv0802c and desuccinylated by NAD-dependent protein deacylase (Rv1151c).

Its subcellular location is the cytoplasm. The protein localises to the nucleoid. It localises to the secreted. It is found in the cell wall. It catalyses the reaction 4 Fe(2+) + O2 + 4 H(+) = 4 Fe(3+) + 2 H2O. Its function is as follows. A nucleoid-associated protein (NAP) that probably plays a role in chromosome compactation. Binds DNA non-specifically, with greater affinity for supercoiled than linear DNA, binds well to nicked DNA, gapped and cruciform DNA. Has a preference for A:T rich DNA. Required for activation of the mtbB operon. Binds the mtbB promoter in the presence of iron, binding is seen with as little as 25 uM Fe(2+) and increases with increasing Fe(2+). RNase E and HupB jointly contribute to cellular adaptation to changing growth conditions and survival during antibiotic treatment and in the host. Plays a role in stress survival. Stimulates supercoiling relaxation by topoisomerase 1 (Top1, topA). Binds Fe(3+) but not Fe(2+). Has ferroxidase activity, converts Fe(2+) into Fe(3+) and in the presence of H(2)O(2) prevents the generation of hydroxyl radicals (the Fenton reaction). Protects DNA from damage in the presence of FeSO(4) and H(2)O(2). May function in iron storage. Involved in iron uptake by bacteria (either Fe(3+) or extracellular carboxymycobactin); antibodies against HupB block uptake of both. Following uptake iron is mostly found in the iron siderophores carboxymycobactin (CMb, extracellular) or mycobactin (Mb, lipophilic). Facilitates transfer of iron from CMb to Mb when liposomes plus a cell wall lysate are incubated with CMb. Binds iron, ferri-CMb and ferri-Mb; has 10-fold higher affinity for ferri-Mb. Suggested to transfer iron from CBm to Mb at the cell membrane. Functionally, required for biofilm formation; trimethylation by recombinant human SUV39H1 (a histone methyltransferase) inhibits biofilm formation. Induces lymphoproliferation, particularly in health tuberculin reactors, and is immunogenic. Maybe involved in pathogenesis of inflammatory bowel disease (IBD) in patients with ulcerative colitis and Crohn disease (CD). Bound by anti-neutrophil cytoplasmic antibodies (pANCA), which are a hallmark of IBD. The binding is due to pANCA directed against H1-3 cross-reacting with DBH epitopes. In CD, target of a strong IgA response. In terms of biological role, may play a role in cell wall assembly. In vitro at low levels enhances formation of TMM and TDM by antigen 85 proteins (fbpA, fbpB, fbpC), at higher levels inhibits TMM and TDM formation. The chain is DNA-binding protein HupB from Mycobacterium tuberculosis (strain ATCC 25618 / H37Rv).